The chain runs to 604 residues: Vacuolar protein sorting-associated protein 64 (604 aa).

Residues 1-89 (MVELEKRRRP…SVHQVSQQQQ (89 aa)) form a disordered region. Topologically, residues 1–578 (MVELEKRRRP…LGVVEGKRTR (578 aa)) are cytoplasmic. Residues 22–34 (DQSNSQGMTKTPE) show a composition bias toward polar residues. Composition is skewed to low complexity over residues 44–57 (RARS…SRSN) and 77–89 (SPPS…QQQQ). Residues 185–257 (LKLGRPVTNS…NGTFVNGVKI (73 aa)) form the FHA domain. A coiled-coil region spans residues 404-563 (NLINMIKTLT…EEKKDTEDTL (160 aa)). The segment at 539–561 (INNDNNAKVKQNDSREEKKDTED) is disordered. The segment covering 548–560 (KQNDSREEKKDTE) has biased composition (basic and acidic residues). Residues 579-598 (VSKGMLFGVVAISFGLVATA) traverse the membrane as a helical; Anchor for type IV membrane protein segment. Over 599-604 (VKQLPQ) the chain is Lumenal.

In terms of assembly, component of a complex at least composed of FAR3, FAR7, FAR8, FAR10, FAR11 and VPS64.

The protein resides in the endoplasmic reticulum membrane. Functionally, participates in the control of the reentry into the cell cycle following pheromone treatment. Involved in vacuolar protein sorting. This chain is Vacuolar protein sorting-associated protein 64 (VPS64), found in Saccharomyces cerevisiae (strain ATCC 204508 / S288c) (Baker's yeast).